A 405-amino-acid chain; its full sequence is Phosphoglycerate kinase (405 aa).

Substrate-binding positions include 24–26, Arg40, 63–66, Arg122, and Arg162; these read DFN and HLGR. ATP contacts are provided by residues Lys212, Glu331, and 361–364; that span reads GGDS.

This sequence belongs to the phosphoglycerate kinase family. In terms of assembly, monomer.

The protein resides in the cytoplasm. It catalyses the reaction (2R)-3-phosphoglycerate + ATP = (2R)-3-phospho-glyceroyl phosphate + ADP. It participates in carbohydrate degradation; glycolysis; pyruvate from D-glyceraldehyde 3-phosphate: step 2/5. This Corynebacterium glutamicum (strain ATCC 13032 / DSM 20300 / JCM 1318 / BCRC 11384 / CCUG 27702 / LMG 3730 / NBRC 12168 / NCIMB 10025 / NRRL B-2784 / 534) protein is Phosphoglycerate kinase (pgk).